Consider the following 198-residue polypeptide: DnaJ homolog subfamily C member 12 (198 aa).

M1 bears the N-acetylmethionine mark. Residues 14 to 79 (DYYTLLGCDE…ASRARYDHWR (66 aa)) form the J domain. Residues 112–167 (MLEESDQTPTDKIENEEQDEQKEIKKEEFGSTTEKMEQKESKSVEKSFSPQNPDSP) are disordered. The segment covering 120 to 156 (PTDKIENEEQDEQKEIKKEEFGSTTEKMEQKESKSVE) has biased composition (basic and acidic residues). Phosphoserine is present on residues S160, S166, and S182.

As to quaternary structure, interacts with HSPA8. Interacts with TPH1. Interacts with TPH2.

The protein resides in the cytoplasm. Probable co-chaperone that participates in the proper folding of biopterin-dependent aromatic amino acid hydroxylases, which include phenylalanine-4-hydroxylase (PAH), tyrosine 3-monooxygenase (TH) and peripheral and neuronal tryptophan hydroxylases (TPH1 and TPH2). The polypeptide is DnaJ homolog subfamily C member 12 (DNAJC12) (Bos taurus (Bovine)).